A 291-amino-acid polypeptide reads, in one-letter code: Pca regulon regulatory protein (291 aa).

The tract at residues 1–22 (MSDETLVNDPVNPEPARPASAA) is disordered. Residues 45 to 105 (MTSLARGLAV…SDGRTYSLLP (61 aa)) enclose the HTH iclR-type domain. The segment at residues 67 to 86 (IAQISHRTEIPRAAVRRCLH) is a DNA-binding region (H-T-H motif). The region spanning 120–291 (LAISAQPYLD…SRDLCHQLFG (172 aa)) is the IclR-ED domain.

Functionally, positive regulator of all genes within the pca regulon, pcaBDC, pcaIJ and pcaF. Also required for the chemotactic response to aromatic compounds. This Pseudomonas putida (Arthrobacter siderocapsulatus) protein is Pca regulon regulatory protein (pcaR).